Reading from the N-terminus, the 693-residue chain is Translation factor GUF1 homolog, mitochondrial (693 aa).

Residues 51-63 (SSSSTEKPTTSGT) show a composition bias toward polar residues. The segment at 51 to 78 (SSSSTEKPTTSGTINGGGGKQKAASQPK) is disordered. Positions 88–270 (QKIRNFSIIA…RIVQMVPPPP (183 aa)) constitute a tr-type G domain. Residues 97–104 (AHIDHGKS), 163–167 (DTPGH), and 217–220 (NKID) contribute to the GTP site.

It belongs to the TRAFAC class translation factor GTPase superfamily. Classic translation factor GTPase family. LepA subfamily.

The protein localises to the mitochondrion inner membrane. It carries out the reaction GTP + H2O = GDP + phosphate + H(+). In terms of biological role, promotes mitochondrial protein synthesis. May act as a fidelity factor of the translation reaction, by catalyzing a one-codon backward translocation of tRNAs on improperly translocated ribosomes. Binds to mitochondrial ribosomes in a GTP-dependent manner. This is Translation factor GUF1 homolog, mitochondrial from Phaeodactylum tricornutum (strain CCAP 1055/1).